A 1123-amino-acid chain; its full sequence is Eukaryotic translation initiation factor 2-alpha kinase PK4 (1123 aa).

Positions 1 to 30 (MKKRIRSSYKVGSSNKYHKKNYTDNEKDKK) are disordered. Residues 21-30 (NYTDNEKDKK) show a composition bias toward basic and acidic residues. Residues 245–253 (IGQGGFGSV) and Lys270 contribute to the ATP site. Disordered regions lie at residues 409 to 493 (FYSD…NDEG), 572 to 609 (RNEDDKNGLDGDKNGLDGDKNGLDGDKNGLDGDKNELD), and 742 to 800 (ENDD…DDDI). Residues 419 to 428 (KNKENPEKNH) show a composition bias toward basic and acidic residues. A compositionally biased stretch (basic residues) spans 455-477 (HKLKKRKNKKKKSKKKRKSKSKI). 5 tandem repeats follow at residues 576–582 (DKNGLDG), 583–589 (DKNGLDG), 590–596 (DKNGLDG), 597–603 (DKNGLDG), and 604–610 (DKNELDD). Residues 576–610 (DKNGLDGDKNGLDGDKNGLDGDKNGLDGDKNELDD) are 5 X 7 AA tandem repeat of D-K-N-[GE]-L-D-[GD]. The Protein kinase domain maps to 678–1049 (TNVESINTNG…KIKVLLDPHL (372 aa)). Over residues 743–754 (NDDDDDDDDDDN) the composition is skewed to acidic residues. Catalysis depends on Asp886, which acts as the Proton acceptor. Thr953 carries the phosphothreonine modification.

Belongs to the protein kinase superfamily. Ser/Thr protein kinase family. GCN2 subfamily. In terms of assembly, may form oligomers in response to stress; oligomerization may result in catalytic activity. Interacts with BIP; the interaction is disrupted in response to stress. Post-translationally, auto-phosphorylated.

It localises to the endoplasmic reticulum membrane. The catalysed reaction is L-seryl-[protein] + ATP = O-phospho-L-seryl-[protein] + ADP + H(+). It carries out the reaction L-threonyl-[protein] + ATP = O-phospho-L-threonyl-[protein] + ADP + H(+). Its activity is regulated as follows. Dissociation from BIP and oligomerization, may results autophosphorylation and kinase activity induction. Its function is as follows. During the asexual blood stage, phosphorylates translation factor eIF2alpha in late schizonts resulting in protein translation inhibition. Plays a role in trophozoite differentiation into schizonts. This chain is Eukaryotic translation initiation factor 2-alpha kinase PK4, found in Plasmodium falciparum.